The primary structure comprises 210 residues: Large ribosomal subunit protein uL4 (210 aa).

Residues S47–N64 show a composition bias toward polar residues. The disordered stretch occupies residues S47 to S83.

Belongs to the universal ribosomal protein uL4 family. Part of the 50S ribosomal subunit.

One of the primary rRNA binding proteins, this protein initially binds near the 5'-end of the 23S rRNA. It is important during the early stages of 50S assembly. It makes multiple contacts with different domains of the 23S rRNA in the assembled 50S subunit and ribosome. Its function is as follows. Forms part of the polypeptide exit tunnel. In Blochmanniella pennsylvanica (strain BPEN), this protein is Large ribosomal subunit protein uL4.